Reading from the N-terminus, the 220-residue chain is Fructose-6-phosphate aldolase 2 (220 aa).

Lysine 85 (schiff-base intermediate with substrate) is an active-site residue.

The protein belongs to the transaldolase family. Type 3A subfamily. In terms of assembly, homodecamer.

It localises to the cytoplasm. It catalyses the reaction beta-D-fructose 6-phosphate = dihydroxyacetone + D-glyceraldehyde 3-phosphate. Functionally, catalyzes the reversible formation of fructose 6-phosphate from dihydroxyacetone and D-glyceraldehyde 3-phosphate via an aldolization reaction. This is Fructose-6-phosphate aldolase 2 (fsaB) from Escherichia coli O6:H1 (strain CFT073 / ATCC 700928 / UPEC).